A 409-amino-acid polypeptide reads, in one-letter code: NADH-quinone oxidoreductase subunit D (409 aa).

It belongs to the complex I 49 kDa subunit family. In terms of assembly, NDH-1 is composed of 14 different subunits. Subunits NuoB, C, D, E, F, and G constitute the peripheral sector of the complex.

Its subcellular location is the cell inner membrane. The catalysed reaction is a quinone + NADH + 5 H(+)(in) = a quinol + NAD(+) + 4 H(+)(out). Functionally, NDH-1 shuttles electrons from NADH, via FMN and iron-sulfur (Fe-S) centers, to quinones in the respiratory chain. The immediate electron acceptor for the enzyme in this species is believed to be ubiquinone. Couples the redox reaction to proton translocation (for every two electrons transferred, four hydrogen ions are translocated across the cytoplasmic membrane), and thus conserves the redox energy in a proton gradient. This Campylobacter concisus (strain 13826) protein is NADH-quinone oxidoreductase subunit D.